The primary structure comprises 261 residues: Glucose 1-dehydrogenase 1 (261 aa).

11–35 (VITGSSTGLGKAMAIRFATEKAKVV) serves as a coordination point for NADP(+). Position 145 (S145) interacts with substrate. Y158 serves as the catalytic Proton acceptor.

This sequence belongs to the short-chain dehydrogenases/reductases (SDR) family. In terms of assembly, homotetramer.

It catalyses the reaction D-glucose + NAD(+) = D-glucono-1,5-lactone + NADH + H(+). The catalysed reaction is D-glucose + NADP(+) = D-glucono-1,5-lactone + NADPH + H(+). May play some role in spore germination. This chain is Glucose 1-dehydrogenase 1 (gdhI), found in Priestia megaterium (Bacillus megaterium).